The following is a 103-amino-acid chain: Large ribosomal subunit protein bL21 (103 aa).

Belongs to the bacterial ribosomal protein bL21 family. Part of the 50S ribosomal subunit. Contacts protein L20.

This protein binds to 23S rRNA in the presence of protein L20. The protein is Large ribosomal subunit protein bL21 of Teredinibacter turnerae (strain ATCC 39867 / T7901).